A 313-amino-acid chain; its full sequence is Aspartate carbamoyltransferase catalytic subunit (313 aa).

Positions 66 and 67 each coordinate carbamoyl phosphate. Lys94 provides a ligand contact to L-aspartate. Arg116, His144, and Gln147 together coordinate carbamoyl phosphate. L-aspartate contacts are provided by Arg177 and Arg231. Residues Gly272 and Pro273 each coordinate carbamoyl phosphate.

The protein belongs to the aspartate/ornithine carbamoyltransferase superfamily. ATCase family. In terms of assembly, heterododecamer (2C3:3R2) of six catalytic PyrB chains organized as two trimers (C3), and six regulatory PyrI chains organized as three dimers (R2).

It carries out the reaction carbamoyl phosphate + L-aspartate = N-carbamoyl-L-aspartate + phosphate + H(+). It functions in the pathway pyrimidine metabolism; UMP biosynthesis via de novo pathway; (S)-dihydroorotate from bicarbonate: step 2/3. In terms of biological role, catalyzes the condensation of carbamoyl phosphate and aspartate to form carbamoyl aspartate and inorganic phosphate, the committed step in the de novo pyrimidine nucleotide biosynthesis pathway. This Pelagibacter ubique (strain HTCC1062) protein is Aspartate carbamoyltransferase catalytic subunit.